The primary structure comprises 2431 residues: Reducing polyketide synthase rads1 (2431 aa).

The Ketosynthase family 3 (KS3) domain occupies 10 to 440 (RAPIAIIGLA…GTNAHIVLER (431 aa)). Residues C184, H319, and H363 each act as for beta-ketoacyl synthase activity in the active site. The segment at 558 to 895 (FVFTGQGAQW…NLAAELFRRG (338 aa)) is malonyl-CoA:ACP transacylase (MAT) domain. Residues 944–1080 (KSILGAELPS…GLISIAYEDT (137 aa)) form an N-terminal hotdog fold region. The 324-residue stretch at 944–1267 (KSILGAELPS…LAELEVDDAA (324 aa)) folds into the PKS/mFAS DH domain. The dehydratase (DH) domain stretch occupies residues 946–1264 (ILGAELPSMD…DFRLAELEVD (319 aa)). The active-site Proton acceptor; for dehydratase activity is the H976. The interval 1108–1267 (PETCSKERFY…LAELEVDDAA (160 aa)) is C-terminal hotdog fold. D1174 serves as the catalytic Proton donor; for dehydratase activity. Residues 1705–2023 (GLLNTLHFVP…QGKHLGKMIL (319 aa)) are enoyl reductase (ER) domain. C1822 functions as the Phosphocysteine intermediate in the catalytic mechanism. The ketoreductase (KR) domain stretch occupies residues 2048–2228 (ATYLIVGGLG…VSVNLGIMRD (181 aa)). The Carrier domain occupies 2346–2423 (VAAAIITEAL…TFAVQIAKKS (78 aa)). O-(pantetheine 4'-phosphoryl)serine is present on S2383.

It functions in the pathway secondary metabolite biosynthesis. Functionally, reducing polyketide synthase; part of the gene cluster that mediates the biosynthesis of radicicol, a resorcylic acid lactone (RAL) that irreversibly inhibits the HSP90 molecular chaperone, an important target for cancer chemotherapy. The cluster encodes only two apparent post-PKS enzymes, a cytochrome P450 monooxygenase (radP) and a non-heme halogenase (radH) that introduce the epoxide and the chlorine, respectively. If this cluster includes all the genes required for radicicol biosynthesis, the remaining structural features of radicicol are presumably generated by the PKSs rads1 and rads2. The C-2' ketone could arise if the R-PKS rads1 and NR-PKS rads2 each carry out four iterations, in contrast to the five iteration-three iteration split for the hypothemycin PKSs. The origin of the cis 5',6' double bond is not known. The radicicol R-PKS radS1 ER domain may catalyze either double bond isomerization or reduction in the third iteration. The polypeptide is Reducing polyketide synthase rads1 (Floropilus chiversii (Chaetomium chiversii)).